We begin with the raw amino-acid sequence, 268 residues long: Zinc transporter ZupT (268 aa).

8 consecutive transmembrane segments (helical) span residues 5–25 (ILFA…GSII), 38–58 (TVSL…EIFV), 72–92 (AGYI…ALID), 124–144 (MGLF…LATF), 152–172 (TLGI…GLAV), 187–207 (FVLS…GFFL), 211–231 (LFTE…MVYI), and 248–268 (LAIG…LLFL). Fe(2+) contacts are provided by asparagine 136 and glutamate 139. Zn(2+)-binding residues include glutamate 139 and histidine 164. Fe(2+) is bound by residues asparagine 165, glutamate 168, and glutamate 197. Glutamate 168 lines the Zn(2+) pocket.

Belongs to the ZIP transporter (TC 2.A.5) family. ZupT subfamily.

It is found in the cell inner membrane. It carries out the reaction Zn(2+)(in) = Zn(2+)(out). Functionally, mediates zinc uptake. May also transport other divalent cations. This chain is Zinc transporter ZupT, found in Chlorobaculum parvum (strain DSM 263 / NCIMB 8327) (Chlorobium vibrioforme subsp. thiosulfatophilum).